The primary structure comprises 418 residues: UDP-N-acetylglucosamine 1-carboxyvinyltransferase (418 aa).

Residue 22-23 (KN) participates in phosphoenolpyruvate binding. UDP-N-acetyl-alpha-D-glucosamine is bound at residue R93. Catalysis depends on C117, which acts as the Proton donor. C117 is subject to 2-(S-cysteinyl)pyruvic acid O-phosphothioketal. UDP-N-acetyl-alpha-D-glucosamine is bound by residues D305 and V327.

This sequence belongs to the EPSP synthase family. MurA subfamily.

Its subcellular location is the cytoplasm. The catalysed reaction is phosphoenolpyruvate + UDP-N-acetyl-alpha-D-glucosamine = UDP-N-acetyl-3-O-(1-carboxyvinyl)-alpha-D-glucosamine + phosphate. Its pathway is cell wall biogenesis; peptidoglycan biosynthesis. Functionally, cell wall formation. Adds enolpyruvyl to UDP-N-acetylglucosamine. In Halorhodospira halophila (strain DSM 244 / SL1) (Ectothiorhodospira halophila (strain DSM 244 / SL1)), this protein is UDP-N-acetylglucosamine 1-carboxyvinyltransferase.